We begin with the raw amino-acid sequence, 393 residues long: Formate-dependent phosphoribosylglycinamide formyltransferase (393 aa).

Residues 22–23 (EL) and Glu82 each bind N(1)-(5-phospho-beta-D-ribosyl)glycinamide. Residues Arg114, Lys155, 160–165 (SSGKGQ), 195–198 (EGFI), and Glu203 contribute to the ATP site. The 190-residue stretch at 119–308 (RLAAEELKLP…QFALHARAIL (190 aa)) folds into the ATP-grasp domain. Positions 267 and 279 each coordinate Mg(2+). Residues Asp286, Lys356, and 363 to 364 (RR) contribute to the N(1)-(5-phospho-beta-D-ribosyl)glycinamide site.

It belongs to the PurK/PurT family. As to quaternary structure, homodimer.

The enzyme catalyses N(1)-(5-phospho-beta-D-ribosyl)glycinamide + formate + ATP = N(2)-formyl-N(1)-(5-phospho-beta-D-ribosyl)glycinamide + ADP + phosphate + H(+). It participates in purine metabolism; IMP biosynthesis via de novo pathway; N(2)-formyl-N(1)-(5-phospho-D-ribosyl)glycinamide from N(1)-(5-phospho-D-ribosyl)glycinamide (formate route): step 1/1. Involved in the de novo purine biosynthesis. Catalyzes the transfer of formate to 5-phospho-ribosyl-glycinamide (GAR), producing 5-phospho-ribosyl-N-formylglycinamide (FGAR). Formate is provided by PurU via hydrolysis of 10-formyl-tetrahydrofolate. This Pseudomonas syringae pv. tomato (strain ATCC BAA-871 / DC3000) protein is Formate-dependent phosphoribosylglycinamide formyltransferase.